The following is a 154-amino-acid chain: Endoribonuclease YbeY (154 aa).

3 residues coordinate Zn(2+): H113, H117, and H123.

This sequence belongs to the endoribonuclease YbeY family. The cofactor is Zn(2+).

Its subcellular location is the cytoplasm. Its function is as follows. Single strand-specific metallo-endoribonuclease involved in late-stage 70S ribosome quality control and in maturation of the 3' terminus of the 16S rRNA. The sequence is that of Endoribonuclease YbeY from Ehrlichia chaffeensis (strain ATCC CRL-10679 / Arkansas).